The chain runs to 493 residues: Poly(ribitol-phosphate) alpha-N-acetylglucosaminyltransferase (493 aa).

UDP-N-acetyl-alpha-D-glucosamine is bound by residues glycine 17, lysine 59, histidine 249, arginine 326, lysine 331, threonine 383, and 403–411 (EGQGLSMIE).

It belongs to the glycosyltransferase group 1 family. In terms of assembly, homotrimer.

The protein localises to the cytoplasm. The catalysed reaction is 4-O-[(D-ribitylphospho)(n)-di{(2R)-glycerylphospho}]-N-acetyl-beta-D-mannosaminyl-(1-&gt;4)-N-acetyl-alpha-D-glucosaminyl di-trans,octa-cis-undecaprenyl diphosphate + n UDP-N-acetyl-alpha-D-glucosamine = 4-O-([2-N-acetyl-alpha-D-glucosaminyl-1-D-ribitylphospho](n)-di{[2R]-1-glycerylphospho})-N-acetyl-beta-D-mannosaminyl-(1-&gt;4)-N-acetyl-alpha-D-glucosaminyl di-trans,octa-cis-undecaprenyl diphosphate + n UDP + n H(+). It functions in the pathway cell wall biogenesis; poly(ribitol phosphate) teichoic acid biosynthesis. In terms of biological role, attaches N-acetyl-alpha-D-glucosamine residues to poly(RboP)-wall teichoic acids (WTAs). In Staphylococcus aureus (strain COL), this protein is Poly(ribitol-phosphate) alpha-N-acetylglucosaminyltransferase.